The following is a 114-amino-acid chain: Transmembrane protein 14C (114 aa).

The next 4 membrane-spanning stretches (helical) occupy residues leucine 8 to isoleucine 28, alanine 33 to serine 53, asparagine 62 to tyrosine 82, and phenylalanine 87 to serine 107.

It localises to the mitochondrion membrane. Required for normal heme biosynthesis. The polypeptide is Transmembrane protein 14C (TMEM14C) (Bos taurus (Bovine)).